The following is a 193-amino-acid chain: dCTP deaminase (193 aa).

DCTP contacts are provided by residues 110–115 (RSSLAR), D128, 136–138 (VLE), Y171, K178, and Q182. The active-site Proton donor/acceptor is E138. Residues 171-193 (YHQRQDAKYHNQKGAVASRIDKD) are disordered.

It belongs to the dCTP deaminase family. As to quaternary structure, homotrimer.

It carries out the reaction dCTP + H2O + H(+) = dUTP + NH4(+). The protein operates within pyrimidine metabolism; dUMP biosynthesis; dUMP from dCTP (dUTP route): step 1/2. Functionally, catalyzes the deamination of dCTP to dUTP. This Hamiltonella defensa subsp. Acyrthosiphon pisum (strain 5AT) protein is dCTP deaminase.